Consider the following 373-residue polypeptide: Cathecol O-methyltransferase 1 (373 aa).

S-adenosyl-L-homocysteine-binding residues include Gly209, Asp232, Asp252, Met253, Met265, and Lys266. Asp232 lines the S-adenosyl-L-methionine pocket. The active-site Proton acceptor is His279.

Belongs to the class I-like SAM-binding methyltransferase superfamily. Cation-independent O-methyltransferase family. COMT subfamily.

It catalyses the reaction catechol + S-adenosyl-L-methionine = guaiacol + S-adenosyl-L-homocysteine + H(+). In terms of biological role, O-methyltransferase that catalyzes the conversion of catechol to guaiacol. Involved in the production of guaiacol in fruits. This Solanum lycopersicum (Tomato) protein is Cathecol O-methyltransferase 1.